A 767-amino-acid chain; its full sequence is U3 small nucleolar RNA-associated protein 14 homolog A (767 aa).

A disordered region spans residues 23-49 (TSNYPLSASEDEGDSDGERKHQKLLEA). S29, S31, S37, S52, S77, and S81 each carry phosphoserine. K122 is covalently cross-linked (Glycyl lysine isopeptide (Lys-Gly) (interchain with G-Cter in SUMO2)). T205 is modified (phosphothreonine). Residues 317–346 (LEARQAMQEQLAKNKELTQKLQVVSESEEE) adopt a coiled-coil conformation. A disordered region spans residues 338-554 (QVVSESEEEG…SKGKNKKEQM (217 aa)). The span at 342-355 (ESEEEGGADEEEAL) shows a compositional bias: acidic residues. Positions 398–433 (AAHEFPENEENDKPVAEEDELLKELEKRRSLRKRSE) are enriched in basic and acidic residues. At R431 the chain carries Citrulline. A Glycyl lysine isopeptide (Lys-Gly) (interchain with G-Cter in SUMO2) cross-link involves residue K447. Phosphoserine is present on S451. Over residues 486–498 (VWEEEPAPEEDEP) the composition is skewed to acidic residues. The span at 503–538 (RPERMRTLEELEELGKEDSLPNKERPRPSVEGEQVR) shows a compositional bias: basic and acidic residues. A Glycyl lysine isopeptide (Lys-Gly) (interchain with G-Cter in SUMO2) cross-link involves residue K518. R586 is modified (citrulline). Residues 730–767 (TAEDVDCRSSPRSDVPVMQSNPKQHSKHQKQRKKSSIG) are disordered. The span at 753–767 (QHSKHQKQRKKSSIG) shows a compositional bias: basic residues.

Belongs to the UTP14 family. As to quaternary structure, interacts with DHX37. Post-translationally, citrullinated by PADI4. Ubiquitously expressed.

The protein localises to the nucleus. Its subcellular location is the nucleolus. May be required for ribosome biogenesis. The chain is U3 small nucleolar RNA-associated protein 14 homolog A (Utp14a) from Mus musculus (Mouse).